We begin with the raw amino-acid sequence, 598 residues long: Aspartate--tRNA(Asp/Asn) ligase (598 aa).

E177 contributes to the L-aspartate binding site. The interval Q201–K204 is aspartate. L-aspartate is bound by residues R223 and H451. R223–E225 contributes to the ATP binding site. E485 contributes to the ATP binding site. R492 lines the L-aspartate pocket. Residue G537–R540 participates in ATP binding.

The protein belongs to the class-II aminoacyl-tRNA synthetase family. Type 1 subfamily. In terms of assembly, homodimer.

It is found in the cytoplasm. The catalysed reaction is tRNA(Asx) + L-aspartate + ATP = L-aspartyl-tRNA(Asx) + AMP + diphosphate. In terms of biological role, aspartyl-tRNA synthetase with relaxed tRNA specificity since it is able to aspartylate not only its cognate tRNA(Asp) but also tRNA(Asn). Reaction proceeds in two steps: L-aspartate is first activated by ATP to form Asp-AMP and then transferred to the acceptor end of tRNA(Asp/Asn). The polypeptide is Aspartate--tRNA(Asp/Asn) ligase (Anaplasma phagocytophilum (strain HZ)).